A 325-amino-acid chain; its full sequence is Elongation factor P--(R)-beta-lysine ligase (325 aa).

Residue 76–78 (SPE) coordinates substrate. ATP contacts are provided by residues 100–102 (RNE) and N109. Y118 provides a ligand contact to substrate. 244–245 (EL) serves as a coordination point for ATP. E251 is a binding site for substrate. ATP is bound at residue G300.

Belongs to the class-II aminoacyl-tRNA synthetase family. EpmA subfamily. As to quaternary structure, homodimer.

The enzyme catalyses D-beta-lysine + L-lysyl-[protein] + ATP = N(6)-((3R)-3,6-diaminohexanoyl)-L-lysyl-[protein] + AMP + diphosphate + H(+). Its function is as follows. With EpmB is involved in the beta-lysylation step of the post-translational modification of translation elongation factor P (EF-P). Catalyzes the ATP-dependent activation of (R)-beta-lysine produced by EpmB, forming a lysyl-adenylate, from which the beta-lysyl moiety is then transferred to the epsilon-amino group of a conserved specific lysine residue in EF-P. This is Elongation factor P--(R)-beta-lysine ligase from Erwinia tasmaniensis (strain DSM 17950 / CFBP 7177 / CIP 109463 / NCPPB 4357 / Et1/99).